Here is a 344-residue protein sequence, read N- to C-terminus: DNA-directed RNA polymerase subunit alpha (344 aa).

The segment at 1 to 246 is alpha N-terminal domain (alpha-NTD); sequence MLVEKFLKDF…EFLFPLVDFE (246 aa). An alpha C-terminal domain (alpha-CTD) region spans residues 259 to 344; the sequence is ESSNLLDMSI…VLSKNVKISE (86 aa).

It belongs to the RNA polymerase alpha chain family. In terms of assembly, homodimer. The RNAP catalytic core consists of 2 alpha, 1 beta, 1 beta' and 1 omega subunit. When a sigma factor is associated with the core the holoenzyme is formed, which can initiate transcription.

The catalysed reaction is RNA(n) + a ribonucleoside 5'-triphosphate = RNA(n+1) + diphosphate. Functionally, DNA-dependent RNA polymerase catalyzes the transcription of DNA into RNA using the four ribonucleoside triphosphates as substrates. This Borreliella burgdorferi (strain ATCC 35210 / DSM 4680 / CIP 102532 / B31) (Borrelia burgdorferi) protein is DNA-directed RNA polymerase subunit alpha.